Reading from the N-terminus, the 146-residue chain is Hemoglobin subunit beta (146 aa).

Val-1 is subject to N-acetylvaline. Residues 2 to 146 (HLTGEEKAAV…VANALAHKYH (145 aa)) form the Globin domain. Thr-12 is subject to Phosphothreonine. Ser-44 bears the Phosphoserine mark. Lys-59 is modified (N6-acetyllysine). His-63 is a heme b binding site. Lys-82 is modified (N6-acetyllysine). His-92 is a heme b binding site. Position 93 is an S-nitrosocysteine (Cys-93). Lys-144 is modified (N6-acetyllysine).

This sequence belongs to the globin family. Heterotetramer of two alpha chains and two beta chains. Red blood cells.

Involved in oxygen transport from the lung to the various peripheral tissues. The sequence is that of Hemoglobin subunit beta (HBB) from Ailurus fulgens (Himalayan red panda).